Here is a 381-residue protein sequence, read N- to C-terminus: Homoserine O-succinyltransferase (381 aa).

Positions 45–360 (NAVLVCHALN…PHGHDAFLLD (316 aa)) constitute an AB hydrolase-1 domain. The active-site Nucleophile is the Ser151. Arg221 is a binding site for substrate. Residues Asp321 and His354 contribute to the active site. Asp355 provides a ligand contact to substrate.

This sequence belongs to the AB hydrolase superfamily. MetX family. In terms of assembly, homodimer.

The protein resides in the cytoplasm. The enzyme catalyses L-homoserine + succinyl-CoA = O-succinyl-L-homoserine + CoA. It participates in amino-acid biosynthesis; L-methionine biosynthesis via de novo pathway; O-succinyl-L-homoserine from L-homoserine: step 1/1. Its function is as follows. Transfers a succinyl group from succinyl-CoA to L-homoserine, forming succinyl-L-homoserine. This is Homoserine O-succinyltransferase from Burkholderia ambifaria (strain ATCC BAA-244 / DSM 16087 / CCUG 44356 / LMG 19182 / AMMD) (Burkholderia cepacia (strain AMMD)).